Consider the following 434-residue polypeptide: MSIVVSKSAPVVVRPSEPATSTADKILLSTLDKPVATIPVTVLLAFDHPIHDATAETIKTALAQSLVHYYPIAGRISCDNDDGGHFYIDCTGEDLGVTFVAASANCTMEELMCLVDDQAPDDETAVVQQLAFNCTPDDLHHRLLWVQVTTLNCGGFVVGVTWSHGVADGPGIAQFIQAVGELARGLPSPSVVPVRLDDKIATQAVPPFTMAVHRFISGLKPVSNLDVRNVTVSSSLINHIIVGARRRATVFEAVAAVLWQCRTRVVMTDPEAPAVLLFAVNARKYLGAKDGYYGCCTAMHMAVSKSGTVANGDIMKLVGIIRRAKEQIPEQLKADDGEMMLRTMVGEKQVNGYESLLYLTSWRNIGFEDVDFGSGKTARVMTYPPRMLSMMPRIAPICFMLKATEEGVRVMSDCVTADHADAFYQEIAKLKATT.

Residues H164 and D371 each act as proton acceptor in the active site.

It belongs to the plant acyltransferase family.

In terms of biological role, involved in the incorporation of ferulate into the cell wall. This Oryza sativa subsp. japonica (Rice) protein is Acyl transferase 15.